Reading from the N-terminus, the 412-residue chain is Maintenance of mitochondrial morphology protein 1 (412 aa).

At 1–19 (MAQDVCPTRSEPSLSFLQG) the chain is on the lumenal side. Residues 20 to 40 (LILGQLSVVLLIAAFIKFFIF) traverse the membrane as a helical segment. The Cytoplasmic portion of the chain corresponds to 41 to 412 (GEAPSAEETA…GSLPGIDMPT (372 aa)). Positions 121–337 (QPESLDWFNV…EPRFQEIELP (217 aa)) constitute an SMP-LTD domain. The span at 372 to 384 (ARQELDTETDGLR) shows a compositional bias: basic and acidic residues. Residues 372-412 (ARQELDTETDGLRYRRRPVGDDTYSVSGSMPGSLPGIDMPT) are disordered.

The protein belongs to the MMM1 family. Homodimer. Component of the ER-mitochondria encounter structure (ERMES) or MDM complex, composed of MMM1, MDM10, MDM12 and MDM34. An MMM1 homodimer associates with one molecule of MDM12 on each side in a pairwise head-to-tail manner, and the SMP-LTD domains of MMM1 and MDM12 generate a continuous hydrophobic tunnel for phospholipid trafficking.

Its subcellular location is the endoplasmic reticulum membrane. Functionally, component of the ERMES/MDM complex, which serves as a molecular tether to connect the endoplasmic reticulum (ER) and mitochondria. Components of this complex are involved in the control of mitochondrial shape and protein biogenesis, and function in nonvesicular lipid trafficking between the ER and mitochondria. The MDM12-MMM1 subcomplex functions in the major beta-barrel assembly pathway that is responsible for biogenesis of all outer membrane beta-barrel proteins, and acts in a late step after the SAM complex. The MDM10-MDM12-MMM1 subcomplex further acts in the TOM40-specific pathway after the action of the MDM12-MMM1 complex. Essential for establishing and maintaining the structure of mitochondria and maintenance of mtDNA nucleoids. In Podospora anserina (strain S / ATCC MYA-4624 / DSM 980 / FGSC 10383) (Pleurage anserina), this protein is Maintenance of mitochondrial morphology protein 1.